Consider the following 159-residue polypeptide: Protein-export protein SecB (159 aa).

The protein belongs to the SecB family. As to quaternary structure, homotetramer, a dimer of dimers. One homotetramer interacts with 1 SecA dimer.

The protein resides in the cytoplasm. In terms of biological role, one of the proteins required for the normal export of preproteins out of the cell cytoplasm. It is a molecular chaperone that binds to a subset of precursor proteins, maintaining them in a translocation-competent state. It also specifically binds to its receptor SecA. This chain is Protein-export protein SecB, found in Nitrobacter winogradskyi (strain ATCC 25391 / DSM 10237 / CIP 104748 / NCIMB 11846 / Nb-255).